The chain runs to 265 residues: Inositol monophosphatase 2 (265 aa).

4 residues coordinate Mg(2+): E65, D86, L88, and D89. E65 serves as a coordination point for substrate. Substrate contacts are provided by residues 88 to 91 (LDGT), 189 to 191 (GSC), E208, and D216. Residue D216 coordinates Mg(2+).

The protein belongs to the inositol monophosphatase superfamily. Requires Mg(2+) as cofactor. In terms of tissue distribution, low expression in roots, stems, leaves, flowers and young and mature green fruits. Expressed in the stem/leaf junctions, below the shoot apex and on the abaxial side of the petiole of the first expanded leaflets.

The catalysed reaction is a myo-inositol phosphate + H2O = myo-inositol + phosphate. It functions in the pathway polyol metabolism; myo-inositol biosynthesis; myo-inositol from D-glucose 6-phosphate: step 2/2. Functionally, responsible for the provision of inositol required for synthesis of phosphatidylinositol and polyphosphoinositides. The polypeptide is Inositol monophosphatase 2 (IMP2) (Solanum lycopersicum (Tomato)).